We begin with the raw amino-acid sequence, 504 residues long: Apoptosis inhibitor 5 (504 aa).

The interval 1–360 (MPTVEELYRN…HQLGRKLPDF (360 aa)) is ARM-like and Heat-like helical repeats. At lysine 251 the chain carries N6-acetyllysine. The interval 370 to 391 (LKDFKIRLQYFARGLQVYIRQL) is leucine-zipper. Threonine 399 carries the post-translational modification Phosphothreonine. Positions 452 to 504 (GQKRASEDTTSGSPPKKSSAGPKRDARQIYNPPSGKYSSNLGNFNYERSLQGK) are disordered. The Nuclear localization signal motif lies at 454–475 (KRASEDTTSGSPPKKSSAGPKR). A phosphoserine mark is found at serine 462, serine 464, and serine 469. Positions 462 to 472 (SGSPPKKSSAG) are enriched in low complexity. The segment covering 487-504 (KYSSNLGNFNYERSLQGK) has biased composition (polar residues).

The protein belongs to the API5 family. Monomer. Interacts with FGF2 and ACIN1. In terms of processing, acetylation at Lys-251 impairs antiapoptotic function.

The protein resides in the nucleus. The protein localises to the cytoplasm. Functionally, antiapoptotic factor that may have a role in protein assembly. Negatively regulates ACIN1. By binding to ACIN1, it suppresses ACIN1 cleavage from CASP3 and ACIN1-mediated DNA fragmentation. Also known to efficiently suppress E2F1-induced apoptosis. The sequence is that of Apoptosis inhibitor 5 (API5) from Pongo abelii (Sumatran orangutan).